The primary structure comprises 129 residues: Small ribosomal subunit protein uS11 (129 aa).

It belongs to the universal ribosomal protein uS11 family. Part of the 30S ribosomal subunit. Interacts with proteins S7 and S18. Binds to IF-3.

Its function is as follows. Located on the platform of the 30S subunit, it bridges several disparate RNA helices of the 16S rRNA. Forms part of the Shine-Dalgarno cleft in the 70S ribosome. The chain is Small ribosomal subunit protein uS11 from Hydrogenovibrio crunogenus (strain DSM 25203 / XCL-2) (Thiomicrospira crunogena).